The primary structure comprises 254 residues: MWVYRLKGTLEALDPILPGLFDGGARGLWEREGEVWAFFPAPVDLPYEGVWEEVGDEDWLEAWRRDLKPALAPPFVVLAPWHTWEGAEIPLVIEPGMAFGTGHHETTRLALKALARHLRPGDKVLDLGTGSGVLAIAAEKLGGKALGVDIDPMVLPQAEANAKRNGVRPRFLEGSLEAALPFGPFDLLVANLYAELHAALAPRYREALVPGGRALLTGILKDRAPLVREAMAGAGFRPLEEAAEGEWVLLAYGR.

S-adenosyl-L-methionine-binding residues include Thr-107, Gly-128, Asp-149, Ser-175, and Asn-191.

The protein belongs to the methyltransferase superfamily. PrmA family.

Its subcellular location is the cytoplasm. The catalysed reaction is L-lysyl-[protein] + 3 S-adenosyl-L-methionine = N(6),N(6),N(6)-trimethyl-L-lysyl-[protein] + 3 S-adenosyl-L-homocysteine + 3 H(+). It catalyses the reaction an N-terminal L-alpha-aminoacyl-[protein] + 3 S-adenosyl-L-methionine = an N-terminal trimethyl-L-alpha-aminoacyl-[protein] + 3 S-adenosyl-L-homocysteine + 3 H(+). In terms of biological role, methylates ribosomal protein L11. Preferentially recognizes free L11 before its incorporation into 50S subunits. This function is dispensable for growth and thermostability. The polypeptide is Ribosomal protein L11 methyltransferase (Thermus thermophilus (strain ATCC 27634 / DSM 579 / HB8)).